The sequence spans 312 residues: Peptide methionine sulfoxide reductase MsrA/MsrB 1 (312 aa).

The tract at residues 1-155 (MAEIYLAGGC…PSGYCHIDVT (155 aa)) is peptide methionine sulfoxide reductase. The active site involves Cys10. One can recognise a MsrB domain in the interval 172-295 (QEVLKASLSE…NSASLRFVAK (124 aa)). Cys284 (nucleophile) is an active-site residue.

The protein in the N-terminal section; belongs to the MsrA Met sulfoxide reductase family. In the C-terminal section; belongs to the MsrB Met sulfoxide reductase family.

The protein resides in the cell membrane. It carries out the reaction L-methionyl-[protein] + [thioredoxin]-disulfide + H2O = L-methionyl-(S)-S-oxide-[protein] + [thioredoxin]-dithiol. The catalysed reaction is [thioredoxin]-disulfide + L-methionine + H2O = L-methionine (S)-S-oxide + [thioredoxin]-dithiol. It catalyses the reaction L-methionyl-[protein] + [thioredoxin]-disulfide + H2O = L-methionyl-(R)-S-oxide-[protein] + [thioredoxin]-dithiol. Has an important function as a repair enzyme for proteins that have been inactivated by oxidation. Catalyzes the reversible oxidation-reduction of methionine sulfoxide in proteins to methionine. This is Peptide methionine sulfoxide reductase MsrA/MsrB 1 (msrAB1) from Streptococcus pneumoniae serotype 4 (strain ATCC BAA-334 / TIGR4).